A 447-amino-acid chain; its full sequence is Argininosuccinate synthase (447 aa).

Residues 12-20 (AYSGGLDTS) and Ala-39 contribute to the ATP site. Residues Tyr-92 and Ser-97 each contribute to the L-citrulline site. Gly-122 is an ATP binding site. L-aspartate-binding residues include Thr-124, Asn-128, and Asp-129. Position 128 (Asn-128) interacts with L-citrulline. 5 residues coordinate L-citrulline: Arg-132, Ser-182, Ser-191, Glu-267, and Tyr-279.

It belongs to the argininosuccinate synthase family. Type 1 subfamily. Homotetramer.

It is found in the cytoplasm. It carries out the reaction L-citrulline + L-aspartate + ATP = 2-(N(omega)-L-arginino)succinate + AMP + diphosphate + H(+). It functions in the pathway amino-acid biosynthesis; L-arginine biosynthesis; L-arginine from L-ornithine and carbamoyl phosphate: step 2/3. The sequence is that of Argininosuccinate synthase from Sulfurovum sp. (strain NBC37-1).